A 397-amino-acid chain; its full sequence is Elongation factor Tu (397 aa).

One can recognise a tr-type G domain in the interval 10-207 (KPHVNVGTIG…TLDTYIPEPE (198 aa)). Residues 19 to 26 (GHVDHGKT) form a G1 region. 19 to 26 (GHVDHGKT) is a binding site for GTP. Residue Thr-26 coordinates Mg(2+). The segment at 60–64 (GITIN) is G2. Residues 81 to 84 (DCPG) are G3. Residues 81 to 85 (DCPGH) and 136 to 139 (NKAD) contribute to the GTP site. Residues 136 to 139 (NKAD) form a G4 region. The tract at residues 174-176 (SAL) is G5.

This sequence belongs to the TRAFAC class translation factor GTPase superfamily. Classic translation factor GTPase family. EF-Tu/EF-1A subfamily. In terms of assembly, monomer.

The protein localises to the cytoplasm. It catalyses the reaction GTP + H2O = GDP + phosphate + H(+). In terms of biological role, GTP hydrolase that promotes the GTP-dependent binding of aminoacyl-tRNA to the A-site of ribosomes during protein biosynthesis. The sequence is that of Elongation factor Tu from Pseudomonas fluorescens (strain ATCC BAA-477 / NRRL B-23932 / Pf-5).